A 369-amino-acid chain; its full sequence is Peptide chain release factor 1 (369 aa).

Gln-234 is subject to N5-methylglutamine.

It belongs to the prokaryotic/mitochondrial release factor family. In terms of processing, methylated by PrmC. Methylation increases the termination efficiency of RF1.

Its subcellular location is the cytoplasm. Functionally, peptide chain release factor 1 directs the termination of translation in response to the peptide chain termination codons UAG and UAA. The sequence is that of Peptide chain release factor 1 from Kocuria rhizophila (strain ATCC 9341 / DSM 348 / NBRC 103217 / DC2201).